The sequence spans 953 residues: Kinesin-like protein KIF23 (953 aa).

A Nuclear localization signal motif is present at residues 7–11 (KTVRK). Residues 25–436 (PVGVYCRVRP…MRFAEVTQEV (412 aa)) enclose the Kinesin motor domain. 112–119 (GVTGSGKT) provides a ligand contact to ATP. Residues Ser155 and Ser160 each carry the phosphoserine modification. Residues 542–618 (QEKLNEREKV…RRLEARLQGM (77 aa)) are a coiled coil. Glycyl lysine isopeptide (Lys-Gly) (interchain with G-Cter in SUMO2) cross-links involve residues Lys572 and Lys587. Residue Ser606 is modified to Phosphoserine. Residues Lys625, Lys648, Lys663, and Lys666 each participate in a glycyl lysine isopeptide (Lys-Gly) (interchain with G-Cter in SUMO2) cross-link. The tract at residues 658 to 695 (IVTEPKPEKPERPSRERDREKIIPRSVSPSPLPLSSNN) is disordered. The segment covering 662–680 (PKPEKPERPSRERDREKII) has biased composition (basic and acidic residues). The span at 681–693 (PRSVSPSPLPLSS) shows a compositional bias: low complexity. Phosphoserine occurs at positions 683 and 685. Thr739 bears the Phosphothreonine mark. A Phosphoserine modification is found at Ser807. Residues Lys816 and Lys847 each participate in a glycyl lysine isopeptide (Lys-Gly) (interchain with G-Cter in SUMO2) cross-link. A Phosphoserine modification is found at Ser860. Residues Lys867, Lys870, and Lys892 each participate in a glycyl lysine isopeptide (Lys-Gly) (interchain with G-Cter in SUMO2) cross-link. 2 disordered regions span residues 894–921 (ELPT…EWTD) and 934–953 (AGSQ…RKKP). At Ser904 the chain carries Phosphoserine. Thr920 carries the post-translational modification Phosphothreonine. Lys949 is covalently cross-linked (Glycyl lysine isopeptide (Lys-Gly) (interchain with G-Cter in SUMO2)).

The protein belongs to the TRAFAC class myosin-kinesin ATPase superfamily. Kinesin family. In terms of assembly, heterotetramer of two molecules each of RACGAP1 and KIF23. Found in the centralspindlin complex. Interacts with RACGAP1; the interaction is direct. Interacts with ECT2 and PRC1. Interacts with ANXA11 during cytokinesis. Interacts with BIRC6/bruce and USP8/UBPY. Interacts with ARF6, forming heterodimers and heterotetramers. Ubiquitinated. Deubiquitinated by USP8/UBPY. Detected in testis and ovary from newborn mice (at protein level). Detected in brain, spinal cord and small intestine.

The protein resides in the nucleus. Its subcellular location is the cytoplasm. It is found in the cytoskeleton. The protein localises to the spindle. It localises to the midbody. The protein resides in the midbody ring. Functionally, component of the centralspindlin complex that serves as a microtubule-dependent and Rho-mediated signaling required for the myosin contractile ring formation during the cell cycle cytokinesis. Essential for cytokinesis in Rho-mediated signaling. Required for the localization of ECT2 to the central spindle. Plus-end-directed motor enzyme that moves antiparallel microtubules in vitro. The chain is Kinesin-like protein KIF23 (Kif23) from Mus musculus (Mouse).